Consider the following 709-residue polypeptide: Pentatricopeptide repeat-containing protein At5g42310, chloroplastic (709 aa).

The transit peptide at 1–54 directs the protein to the chloroplast; the sequence is MLLLQQPPLVSTRFHSLYFLTHHHHHHHRFFQPPISAFSATTSASLPSPSPSSS. PPR repeat units lie at residues 196–230, 231–267, 268–302, 303–337, 338–372, 373–407, 408–442, 443–477, 478–512, 513–547, 548–582, 583–617, 618–652, and 653–687; these read TPLT…GYQS, DFVN…KLEL, DVQL…GLSA, KTAT…GIKP, RTRA…GVSP, DEHT…DVQP, NSFV…GVKP, DRQF…GIEP, DRVT…GCLP, CATT…GILP, NVVT…GLKP, SSTM…GLKP, SLLA…GVKP, and DVVT…GCKP.

Belongs to the PPR family. P subfamily. As to quaternary structure, interacts with PDE338.

The protein localises to the plastid. It is found in the chloroplast stroma. The protein resides in the chloroplast thylakoid. It localises to the chloroplast. In terms of biological role, required for chloroplast protein synthesis and accumulation of subunits of the thylakoid protein complexes. Activates psaC and petA translation by binding their 5'-UTRs. Required for the correct processing of petB and petD mRNAs. Interacts with the petB and petD intergenic region and is required for the generation of petB and petD monocistronic RNAs. The sequence is that of Pentatricopeptide repeat-containing protein At5g42310, chloroplastic from Arabidopsis thaliana (Mouse-ear cress).